A 384-amino-acid polypeptide reads, in one-letter code: Ubiquitin-like modifier-activating enzyme 5 (384 aa).

The ATP site is built by Gly-63, Asp-84, Lys-107, Asn-130, and Asn-164. Residues Cys-206 and Cys-209 each contribute to the Zn(2+) site. Cys-230 serves as the catalytic Glycyl thioester intermediate. Zn(2+) contacts are provided by Cys-283 and Cys-288. The interval 352-375 (EAPEKSSAEATQAATAPVDDTSLE) is disordered.

The protein belongs to the ubiquitin-activating E1 family. UBA5 subfamily.

E1-like enzyme which activates UFM1. The chain is Ubiquitin-like modifier-activating enzyme 5 from Drosophila persimilis (Fruit fly).